A 345-amino-acid chain; its full sequence is GTPase Obg (345 aa).

The region spanning 1 to 159 is the Obg domain; it reads MKFLDQAKVY…KWIWLRLKLI (159 aa). An OBG-type G domain is found at 160-327; that stretch reads ADAGLVGLPN…ALRALLAVID (168 aa). Residues 166-173, 191-195, 212-215, 279-282, and 308-310 contribute to the GTP site; these read GLPNAGKS, FTTLH, DIPG, SKID, and SSQ. Mg(2+) is bound by residues serine 173 and threonine 193.

It belongs to the TRAFAC class OBG-HflX-like GTPase superfamily. OBG GTPase family. As to quaternary structure, monomer. Requires Mg(2+) as cofactor.

It is found in the cytoplasm. Functionally, an essential GTPase which binds GTP, GDP and possibly (p)ppGpp with moderate affinity, with high nucleotide exchange rates and a fairly low GTP hydrolysis rate. Plays a role in control of the cell cycle, stress response, ribosome biogenesis and in those bacteria that undergo differentiation, in morphogenesis control. This chain is GTPase Obg, found in Azorhizobium caulinodans (strain ATCC 43989 / DSM 5975 / JCM 20966 / LMG 6465 / NBRC 14845 / NCIMB 13405 / ORS 571).